A 483-amino-acid chain; its full sequence is 3-isopropylmalate dehydratase large subunit (483 aa).

Residues Cys-352, Cys-412, and Cys-415 each coordinate [4Fe-4S] cluster.

The protein belongs to the aconitase/IPM isomerase family. LeuC type 1 subfamily. In terms of assembly, heterodimer of LeuC and LeuD. [4Fe-4S] cluster is required as a cofactor.

It catalyses the reaction (2R,3S)-3-isopropylmalate = (2S)-2-isopropylmalate. The protein operates within amino-acid biosynthesis; L-leucine biosynthesis; L-leucine from 3-methyl-2-oxobutanoate: step 2/4. Functionally, catalyzes the isomerization between 2-isopropylmalate and 3-isopropylmalate, via the formation of 2-isopropylmaleate. In Paenarthrobacter aurescens (strain TC1), this protein is 3-isopropylmalate dehydratase large subunit.